A 149-amino-acid chain; its full sequence is MSMSTSTEVIAHHWAFGIFLIVAIGLCCLMLVGAWFLGGRARARYKNTPFESGIDSVGTARLRLSAKFYLVAMFFVIFDVEALYLFAWSTSVREVGWLGFIEAAIFILVLLAGLVYLVRIGALEWTPSRSRRERLNTEEAGSLTNRHTQ.

Helical transmembrane passes span 16–36 (FGIFLIVAIGLCCLMLVGAWF), 68–88 (FYLVAMFFVIFDVEALYLFAW), and 98–118 (LGFIEAAIFILVLLAGLVYLV).

It belongs to the complex I subunit 3 family. As to quaternary structure, NDH-1 is composed of 13 different subunits. Subunits NuoA, H, J, K, L, M, N constitute the membrane sector of the complex.

The protein localises to the cell inner membrane. It catalyses the reaction a quinone + NADH + 5 H(+)(in) = a quinol + NAD(+) + 4 H(+)(out). In terms of biological role, NDH-1 shuttles electrons from NADH, via FMN and iron-sulfur (Fe-S) centers, to quinones in the respiratory chain. The immediate electron acceptor for the enzyme in this species is believed to be ubiquinone. Couples the redox reaction to proton translocation (for every two electrons transferred, four hydrogen ions are translocated across the cytoplasmic membrane), and thus conserves the redox energy in a proton gradient. In Cronobacter sakazakii (strain ATCC BAA-894) (Enterobacter sakazakii), this protein is NADH-quinone oxidoreductase subunit A.